Consider the following 802-residue polypeptide: Acetyl-CoA decarbonylase/synthase complex subunit alpha (802 aa).

Cys-69, Cys-72, Cys-73, Cys-75, Cys-80, and Cys-90 together coordinate [4Fe-4S] cluster. His-113 is a binding site for CO. [Ni-4Fe-4S] cluster-binding residues include His-246, Cys-274, and Cys-319. 4Fe-4S ferredoxin-type domains are found at residues 404-432 (EELKELADSCVHCLKCEVACPNSLPISEA) and 442-473 (SKFELLHDKCIACGRCEYACPKDIDIVNVIEK). 8 residues coordinate [4Fe-4S] cluster: Cys-413, Cys-416, Cys-419, Cys-423, Cys-451, Cys-454, Cys-457, and Cys-461. Residues Cys-519, Cys-548, and Cys-583 each contribute to the [Ni-4Fe-4S] cluster site.

It belongs to the Ni-containing carbon monoxide dehydrogenase family. In terms of assembly, heterotetramer of two alpha and two epsilon subunits. The ACDS complex is made up of alpha, epsilon, beta, gamma and delta subunits with a probable stoichiometry of (alpha(2)epsilon(2))(4)-beta(8)-(gamma(1)delta(1))(8). [4Fe-4S] cluster serves as cofactor. [Ni-4Fe-4S] cluster is required as a cofactor.

It carries out the reaction CO + 2 oxidized [2Fe-2S]-[ferredoxin] + H2O = 2 reduced [2Fe-2S]-[ferredoxin] + CO2 + 2 H(+). It functions in the pathway one-carbon metabolism; methanogenesis from acetate. Functionally, part of the ACDS complex that catalyzes the reversible cleavage of acetyl-CoA, allowing growth on acetate as sole source of carbon and energy. The alpha-epsilon subcomponent functions as a carbon monoxide dehydrogenase. This chain is Acetyl-CoA decarbonylase/synthase complex subunit alpha, found in Methanococcoides burtonii (strain DSM 6242 / NBRC 107633 / OCM 468 / ACE-M).